The following is a 225-amino-acid chain: NAD(P)H-quinone oxidoreductase subunit K, chloroplastic (225 aa).

[4Fe-4S] cluster contacts are provided by Cys43, Cys44, Cys108, and Cys139.

This sequence belongs to the complex I 20 kDa subunit family. NDH is composed of at least 16 different subunits, 5 of which are encoded in the nucleus. [4Fe-4S] cluster is required as a cofactor.

Its subcellular location is the plastid. It localises to the chloroplast thylakoid membrane. It carries out the reaction a plastoquinone + NADH + (n+1) H(+)(in) = a plastoquinol + NAD(+) + n H(+)(out). The enzyme catalyses a plastoquinone + NADPH + (n+1) H(+)(in) = a plastoquinol + NADP(+) + n H(+)(out). NDH shuttles electrons from NAD(P)H:plastoquinone, via FMN and iron-sulfur (Fe-S) centers, to quinones in the photosynthetic chain and possibly in a chloroplast respiratory chain. The immediate electron acceptor for the enzyme in this species is believed to be plastoquinone. Couples the redox reaction to proton translocation, and thus conserves the redox energy in a proton gradient. In Solanum bulbocastanum (Wild potato), this protein is NAD(P)H-quinone oxidoreductase subunit K, chloroplastic.